A 382-amino-acid polypeptide reads, in one-letter code: Galactokinase (382 aa).

Position 34–37 (34–37 (EHTD)) interacts with substrate. 124–130 (GAGLSSS) is an ATP binding site. The Mg(2+) site is built by Ser-130 and Glu-162. Asp-174 serves as the catalytic Proton acceptor. Tyr-223 is a substrate binding site.

The protein belongs to the GHMP kinase family. GalK subfamily.

Its subcellular location is the cytoplasm. The enzyme catalyses alpha-D-galactose + ATP = alpha-D-galactose 1-phosphate + ADP + H(+). The protein operates within carbohydrate metabolism; galactose metabolism. Functionally, catalyzes the transfer of the gamma-phosphate of ATP to D-galactose to form alpha-D-galactose-1-phosphate (Gal-1-P). The chain is Galactokinase from Escherichia fergusonii (strain ATCC 35469 / DSM 13698 / CCUG 18766 / IAM 14443 / JCM 21226 / LMG 7866 / NBRC 102419 / NCTC 12128 / CDC 0568-73).